The following is a 284-amino-acid chain: uncharacterized protein (284 aa).

This is an uncharacterized protein from Acanthamoeba polyphaga (Amoeba).